The primary structure comprises 806 residues: MRYEFSTIEQKWQKYWADNQTFLTDDNPDKPKYYVLDMFPYPSGTGLHVGHLEGYTATDIIARYKRSRGFNVLHPMGWDAFGLPAEQFAIKTGTHPTTTTQKNVSSFRQTLQNMGFSYDWSREINTTDPNYFRWTQWIFLQLLDKGLAYMSEVDVNWCEDLRVVLANEEVDEKIAAGHTVVRKPLRQWVLKITAYAERLLGDLDELDWPENVKQMQRNWIGRSEGVEIDFELPCHRQKLTVYTTRPDTLFGASYLVISPEHPLAEKLATAPQLVELKNYIREAKLKTELERTGLQKEKTGVFTGSYAINPANGEALPVWVSDFVLTSYGTGAIMSVPAHDSRDWEFAKKFGLPIIEVIQSPHDVQDEVFEGKESICVNSSNNEISLDGLDFTSAFKRMADWIESSGKGRRKINYKLRDWIFSRQRYWGEPIPVKHYDDGSLRPETDLPLTLPEVEAYHPSTTGESPLANIEDWLFGQDEHGAFRRETNTMPQWAGSCWYYLRFIDPSNQQQLVDPDKERYWMNVDLYIGGAEHAVLHLLYARFWHKVLYDLGVVSTKEPFQKLFNQGMILGEDNEKMSKSRGNVIPADHVMQSYGADAVRLYEMFLGPLEQVKPWNTNGIEGISRFLSRVWRIVYPEQEGPAMLTDTPLDDALTRRMHKTIKKVTEDTEHLKFNTAIAEMMVFVNELHKAGCRNRKALETLLLLLAPYAPHICEELWQAAGNNEPIARAPFPVFDPALAEDNELTIAVQVNGKLRGTFLAPAGLSKEAMIAGAREIESVKKFLEGMTIIKEIAVPGKLVNFAVKPL.

The short motif at 40–51 is the 'HIGH' region element; that stretch reads PYPSGTGLHVGH. Positions 576–580 match the 'KMSKS' region motif; sequence KMSKS. Lysine 579 is an ATP binding site.

It belongs to the class-I aminoacyl-tRNA synthetase family.

Its subcellular location is the cytoplasm. It carries out the reaction tRNA(Leu) + L-leucine + ATP = L-leucyl-tRNA(Leu) + AMP + diphosphate. The polypeptide is Leucine--tRNA ligase (Prosthecochloris aestuarii (strain DSM 271 / SK 413)).